A 313-amino-acid chain; its full sequence is Transaldolase (313 aa).

The Schiff-base intermediate with substrate role is filled by K125.

Belongs to the transaldolase family. Type 1 subfamily. In terms of assembly, homodimer.

The protein resides in the cytoplasm. The catalysed reaction is D-sedoheptulose 7-phosphate + D-glyceraldehyde 3-phosphate = D-erythrose 4-phosphate + beta-D-fructose 6-phosphate. Its pathway is carbohydrate degradation; pentose phosphate pathway; D-glyceraldehyde 3-phosphate and beta-D-fructose 6-phosphate from D-ribose 5-phosphate and D-xylulose 5-phosphate (non-oxidative stage): step 2/3. Its function is as follows. Transaldolase is important for the balance of metabolites in the pentose-phosphate pathway. The protein is Transaldolase of Pseudomonas syringae pv. syringae (strain B728a).